The sequence spans 345 residues: Erythronate-4-phosphate dehydrogenase (345 aa).

S45 is a binding site for substrate. NAD(+) is bound by residues D146 and T174. The active site involves R207. NAD(+) is bound at residue D227. E232 is a catalytic residue. Residue H249 is the Proton donor of the active site. Position 252 (G252) interacts with NAD(+).

Belongs to the D-isomer specific 2-hydroxyacid dehydrogenase family. PdxB subfamily. In terms of assembly, homodimer.

Its subcellular location is the cytoplasm. It catalyses the reaction 4-phospho-D-erythronate + NAD(+) = (R)-3-hydroxy-2-oxo-4-phosphooxybutanoate + NADH + H(+). Its pathway is cofactor biosynthesis; pyridoxine 5'-phosphate biosynthesis; pyridoxine 5'-phosphate from D-erythrose 4-phosphate: step 2/5. Catalyzes the oxidation of erythronate-4-phosphate to 3-hydroxy-2-oxo-4-phosphonooxybutanoate. The polypeptide is Erythronate-4-phosphate dehydrogenase (Ruthia magnifica subsp. Calyptogena magnifica).